The sequence spans 632 residues: 1-deoxy-D-xylulose-5-phosphate synthase (632 aa).

Thiamine diphosphate is bound by residues His-73 and 114–116 (SHA). Asp-146 contacts Mg(2+). Thiamine diphosphate is bound by residues 147–148 (GA), Asn-176, Tyr-287, and Glu-368. Asn-176 serves as a coordination point for Mg(2+).

It belongs to the transketolase family. DXPS subfamily. In terms of assembly, homodimer. Requires Mg(2+) as cofactor. The cofactor is thiamine diphosphate.

The enzyme catalyses D-glyceraldehyde 3-phosphate + pyruvate + H(+) = 1-deoxy-D-xylulose 5-phosphate + CO2. It functions in the pathway metabolic intermediate biosynthesis; 1-deoxy-D-xylulose 5-phosphate biosynthesis; 1-deoxy-D-xylulose 5-phosphate from D-glyceraldehyde 3-phosphate and pyruvate: step 1/1. Functionally, catalyzes the acyloin condensation reaction between C atoms 2 and 3 of pyruvate and glyceraldehyde 3-phosphate to yield 1-deoxy-D-xylulose-5-phosphate (DXP). This is 1-deoxy-D-xylulose-5-phosphate synthase from Corynebacterium glutamicum (strain R).